A 61-amino-acid polypeptide reads, in one-letter code: MAKKSMIVKANRAPKFSTQGYNRCKRCGRPRAYMRKFGICRICFRELASQGLIPGVTKSSW.

4 residues coordinate Zn(2+): Cys-24, Cys-27, Cys-40, and Cys-43.

The protein belongs to the universal ribosomal protein uS14 family. Zinc-binding uS14 subfamily. As to quaternary structure, part of the 30S ribosomal subunit. Contacts proteins S3 and S10. Zn(2+) is required as a cofactor.

Binds 16S rRNA, required for the assembly of 30S particles and may also be responsible for determining the conformation of the 16S rRNA at the A site. This chain is Small ribosomal subunit protein uS14, found in Herpetosiphon aurantiacus (strain ATCC 23779 / DSM 785 / 114-95).